We begin with the raw amino-acid sequence, 737 residues long: Dipeptidyl peptidase 3 (737 aa).

An N-acetylalanine modification is found at Ala-2. His-450 contributes to the Zn(2+) binding site. Glu-451 is a catalytic residue. Residues His-455 and Glu-508 each coordinate Zn(2+).

Belongs to the peptidase M49 family. Zn(2+) is required as a cofactor. Detected in placenta (at protein level). Detected in erythrocytes (at protein level).

The protein resides in the cytoplasm. The protein localises to the cytosol. It catalyses the reaction Release of an N-terminal dipeptide from a peptide comprising four or more residues, with broad specificity. Also acts on dipeptidyl 2-naphthylamides.. Its activity is regulated as follows. Activated by Co(2+). Inhibited by EDTA and o-phenanthroline (in vitro). Functionally, cleaves and degrades bioactive peptides, including angiotensin, Leu-enkephalin and Met-enkephalin. Also cleaves Arg-Arg-beta-naphthylamide (in vitro). The sequence is that of Dipeptidyl peptidase 3 (DPP3) from Homo sapiens (Human).